The chain runs to 463 residues: Calcitonin gene-related peptide type 1 receptor (463 aa).

Residues 1–22 (MDKKHILCFLVLLPLNMALISA) form the signal peptide. The Extracellular segment spans residues 23–138 (ESEEGVNQTD…STHEKVKTAL (116 aa)). N-linked (GlcNAc...) asparagine glycans are attached at residues N29, N65, N117, N122, N127, and N128. 3 cysteine pairs are disulfide-bonded: C47–C73, C64–C104, and C87–C126. Residues 139–163 (NLFYLTIIGHGLSIASLIISLIIFF) traverse the membrane as a helical segment. Topologically, residues 164-174 (YFKSLSCQRIT) are cytoplasmic. A helical transmembrane segment spans residues 175 to 197 (LHKNLFFSFICNSIVTIIHLTAV). At 198–208 (ANNQALVATNP) the chain is on the extracellular side. The helical transmembrane segment at 209-237 (VSCKVSQFIHLYLMGCNYFWMLCEGVYLH) threads the bilayer. Over 238–251 (TLIVVAVFAEKQHL) the chain is Cytoplasmic. Residues 252–272 (MWYYFLGWGFPLLPACIHAIA) form a helical membrane-spanning segment. Residues 273-288 (RSLYYNDNCWISSDTH) are Extracellular-facing. Positions 287-288 (TH) are required for RAMP3 interaction. Residues 289 to 313 (LLYIIHGPICAALLVNLFFLLNIVR) form a helical membrane-spanning segment. Topologically, residues 314 to 328 (VLITKLKVTHQVESN) are cytoplasmic. A helical transmembrane segment spans residues 329-350 (LYMKAVRATLILVPLLGIEFVL). Residues 351-365 (FPWRPEGKVAEEVYD) are Extracellular-facing. The helical transmembrane segment at 366-386 (YVMHILMHFQGLLVATIFCFF) threads the bilayer. At 387–463 (NGEVQAILRR…KSENMYDLVM (77 aa)) the chain is on the cytoplasmic side. S419 and S444 each carry phosphoserine.

It belongs to the G-protein coupled receptor 2 family. Heterodimer of CALCRL and RAMP1; the receptor complex functions as CGRP receptor. Heterodimer of CALCRL and RAMP2 or CALCRL and RAMP3; the complexes function as adrenomedullin receptor. Expressed predominantly in the lung, thymus, heart and brain.

Its subcellular location is the cell membrane. Its function is as follows. G protein-coupled receptor which specificity is determined by its interaction with receptor-activity-modifying proteins (RAMPs). Together with RAMP1, form the receptor complex for calcitonin-gene-related peptides CALCA/CGRP1 and CALCB/CGRP2. Together with RAMP2 or RAMP3, function as receptor complexes for adrenomedullin (ADM and ADM2). Ligand binding causes a conformation change that triggers signaling via guanine nucleotide-binding proteins (G proteins) and modulates the activity of downstream effectors. Activates cAMP-dependent pathway. This is Calcitonin gene-related peptide type 1 receptor from Mus musculus (Mouse).